The chain runs to 487 residues: Glutamyl-tRNA(Gln) amidotransferase subunit A (487 aa).

Active-site charge relay system residues include lysine 75 and serine 150. The Acyl-ester intermediate role is filled by serine 174.

The protein belongs to the amidase family. GatA subfamily. In terms of assembly, heterotrimer of A, B and C subunits.

It carries out the reaction L-glutamyl-tRNA(Gln) + L-glutamine + ATP + H2O = L-glutaminyl-tRNA(Gln) + L-glutamate + ADP + phosphate + H(+). Functionally, allows the formation of correctly charged Gln-tRNA(Gln) through the transamidation of misacylated Glu-tRNA(Gln) in organisms which lack glutaminyl-tRNA synthetase. The reaction takes place in the presence of glutamine and ATP through an activated gamma-phospho-Glu-tRNA(Gln). The polypeptide is Glutamyl-tRNA(Gln) amidotransferase subunit A (Deinococcus deserti (strain DSM 17065 / CIP 109153 / LMG 22923 / VCD115)).